We begin with the raw amino-acid sequence, 305 residues long: Large ribosomal subunit protein uL2m (305 aa).

The transit peptide at methionine 1–asparagine 60 directs the protein to the mitochondrion. The interval arginine 264–glycine 283 is disordered. Residues arginine 274 to glycine 283 show a composition bias toward basic residues.

This sequence belongs to the universal ribosomal protein uL2 family. As to quaternary structure, component of the mitochondrial large ribosomal subunit (mt-LSU). Mature mammalian 55S mitochondrial ribosomes consist of a small (28S) and a large (39S) subunit. The 28S small subunit contains a 12S ribosomal RNA (12S mt-rRNA) and 30 different proteins. The 39S large subunit contains a 16S rRNA (16S mt-rRNA), a copy of mitochondrial valine transfer RNA (mt-tRNA(Val)), which plays an integral structural role, and 52 different proteins.

It localises to the mitochondrion. In Homo sapiens (Human), this protein is Large ribosomal subunit protein uL2m (MRPL2).